Consider the following 201-residue polypeptide: Natural cytotoxicity triggering receptor 3 (201 aa).

The N-terminal stretch at 1-18 is a signal peptide; it reads MAWMLLLILIMVYPGSCA. Residues 19–126 enclose the Ig-like domain; it reads LWVSQPPEIR…VGTGNGTRLV (108 aa). The Extracellular portion of the chain corresponds to 19–133; that stretch reads LWVSQPPEIR…RLVVEKEYPQ (115 aa). Cys39 and Cys108 are joined by a disulfide. Residues Asn42 and Asn121 are each glycosylated (N-linked (GlcNAc...) asparagine). The chain crosses the membrane as a helical span at residues 134–154; the sequence is LGAGTVLLLRAGFYAVSFLSV. Residues 155 to 201 lie on the Cytoplasmic side of the membrane; sequence AMGSTLYYQGKCLTWKGPRRQLPAVVPGPLPPPCGSSAHLLPPVPGG.

Belongs to the natural cytotoxicity receptor (NCR) family. In terms of assembly, homodimer in the unliganted form. Interacts with CD3Z. Interacts with and is activated by binding to NCR3LG1. Interacts with and is activated by binding to BAG6. Interacts with and is inhibited by binding to LGALS3.

It localises to the cell membrane. In terms of biological role, cell membrane receptor of natural killer/NK cells that is activated by binding of extracellular ligands including BAG6 and NCR3LG1. Stimulates NK cells cytotoxicity toward neighboring cells producing these ligands. It controls, for instance, NK cells cytotoxicity against tumor cells. Engagement of NCR3 by BAG6 also promotes myeloid dendritic cells (DC) maturation, both through killing DCs that did not acquire a mature phenotype, and inducing the release by NK cells of TNFA and IFNG that promote DC maturation. The chain is Natural cytotoxicity triggering receptor 3 (NCR3) from Macaca mulatta (Rhesus macaque).